A 240-amino-acid polypeptide reads, in one-letter code: Protein UL136 (240 aa).

The chain crosses the membrane as a helical span at residues 69–89; the sequence is VICAVLLTLMIMAIGALIAYL. Disordered regions lie at residues 119-142 and 164-199; these read ERQR…ARRP and TRPA…PATR.

The protein belongs to the HHV-5 UL136 protein family. As to quaternary structure, interacts with host ATP1B1.

The protein localises to the host membrane. This is Protein UL136 (UL136) from Human cytomegalovirus (strain Towne) (HHV-5).